A 548-amino-acid polypeptide reads, in one-letter code: MSSPTKLTAWQKLTEHKQEMASVSMKSLFEADPKRAEKYTTQAAGWTLDYAKNRANEKTLSLLTDLAKEAGLESAIKGMFSGAHINNTEDRSVLHIALRASQAQETLMVDGVNVLAEVRATLKQMEAFVTQLHNGEWKGYTGKRITDVISIGIGGSYLGPKVVAEALTPYKKDGIKVHFVANIDGSDITGKLKLVNPETTVFVISSKTFGTLETLSNANAARDWFLSNGGSQSDVSKHFAAVSSNVKKAVDFGMAEENIFPMWDWVGGRYSLWSAIGLPVAIAVGMDNFYELLDGAHQMDEHFRTTPFEENLPVIMGTLGVWYINFHNAQTHALIPYDHYLRAMPAHIQQLDMESNGKSTLLNGDGVETDTGPIIWGGAGTNGQHAYHQLLHQGTRLVPVDFIVPLASHNPIGEHHAQLFANCLSQSQALMVGKTLEQAQQELRDAGASPDQVEAIAPHKVIKGNRPSNTLLTDKMTPATVGALIALYEHRTFVQGTIWGINSFDQWGVELGKVLGTDIYNRLVSDSDNSALDASTQALIKAFKKAQA.

The active-site Proton donor is the Glu-354. Catalysis depends on residues His-385 and Lys-513.

Belongs to the GPI family.

The protein localises to the cytoplasm. It carries out the reaction alpha-D-glucose 6-phosphate = beta-D-fructose 6-phosphate. Its pathway is carbohydrate biosynthesis; gluconeogenesis. It participates in carbohydrate degradation; glycolysis; D-glyceraldehyde 3-phosphate and glycerone phosphate from D-glucose: step 2/4. In terms of biological role, catalyzes the reversible isomerization of glucose-6-phosphate to fructose-6-phosphate. This is Glucose-6-phosphate isomerase from Marinomonas sp. (strain MWYL1).